A 127-amino-acid polypeptide reads, in one-letter code: Putative B3 domain-containing protein At4g12617 (127 aa).

The segment at residues 35-127 (IMMPKTLLEA…HTRLNFKHVA (93 aa)) is a DNA-binding region (TF-B3).

It is found in the nucleus. The sequence is that of Putative B3 domain-containing protein At4g12617 from Arabidopsis thaliana (Mouse-ear cress).